The chain runs to 1242 residues: ATP-dependent helicase/nuclease subunit A (1242 aa).

A UvrD-like helicase ATP-binding domain is found at 12-487; that stretch reads SRWTDEQWKA…IDLASNFRSR (476 aa). 33–40 provides a ligand contact to ATP; it reads AAAGSGKT. A UvrD-like helicase C-terminal domain is found at 514–808; the sequence is AAQLKYGADY…RVMTIHSSKG (295 aa).

Belongs to the helicase family. AddA subfamily. Heterodimer of AddA and AddB/RexB. The cofactor is Mg(2+).

It catalyses the reaction Couples ATP hydrolysis with the unwinding of duplex DNA by translocating in the 3'-5' direction.. The enzyme catalyses ATP + H2O = ADP + phosphate + H(+). Functionally, the heterodimer acts as both an ATP-dependent DNA helicase and an ATP-dependent, dual-direction single-stranded exonuclease. Recognizes the chi site generating a DNA molecule suitable for the initiation of homologous recombination. The AddA nuclease domain is required for chi fragment generation; this subunit has the helicase and 3' -&gt; 5' nuclease activities. The protein is ATP-dependent helicase/nuclease subunit A of Geobacillus thermodenitrificans (strain NG80-2).